Reading from the N-terminus, the 203-residue chain is ATP-dependent Clp protease proteolytic subunit (203 aa).

The Nucleophile role is filled by S107. H132 is an active-site residue.

Belongs to the peptidase S14 family. In terms of assembly, fourteen ClpP subunits assemble into 2 heptameric rings which stack back to back to give a disk-like structure with a central cavity, resembling the structure of eukaryotic proteasomes.

It is found in the cytoplasm. The catalysed reaction is Hydrolysis of proteins to small peptides in the presence of ATP and magnesium. alpha-casein is the usual test substrate. In the absence of ATP, only oligopeptides shorter than five residues are hydrolyzed (such as succinyl-Leu-Tyr-|-NHMec, and Leu-Tyr-Leu-|-Tyr-Trp, in which cleavage of the -Tyr-|-Leu- and -Tyr-|-Trp bonds also occurs).. Its function is as follows. Cleaves peptides in various proteins in a process that requires ATP hydrolysis. Has a chymotrypsin-like activity. Plays a major role in the degradation of misfolded proteins. This is ATP-dependent Clp protease proteolytic subunit from Shewanella piezotolerans (strain WP3 / JCM 13877).